We begin with the raw amino-acid sequence, 331 residues long: MARMYYDQDANLDLLAGKTVAIIGYGSQGHAHALNLKDSGVNVVVGLYSGSKSVAKAEGAGLKVLSVAEAAKAADLIMILLPDEVQKTVYEAEIAPNLVAGNVLLFAHGFNINFAQIVPPADVDVVMAAPKGPGHLVRRTYEQGQGVPALFAVYQDASGQARDYAMAYAKGIGGTRAGILETTFREETETDLFGEQVVLCGGLTALIKAGFDTLVEAGYQPELAYFECLHEVKLIVDLIVEGGLAKMRDSISNTAEYGDLTRGPRIVTEETKAEMRQILDEIQSGQFAREFVLENQAGKPGFTAMRRRESEELIEEVGKDLRAMFSWLKDR.

Residues 2-182 form the KARI N-terminal Rossmann domain; that stretch reads ARMYYDQDAN…GGTRAGILET (181 aa). Residues 25–28, serine 51, serine 53, and 83–86 each bind NADP(+); these read YGSQ and DEVQ. Histidine 108 is an active-site residue. An NADP(+)-binding site is contributed by glycine 134. Residues 183–328 enclose the KARI C-terminal knotted domain; sequence TFREETETDL…KDLRAMFSWL (146 aa). The Mg(2+) site is built by aspartate 191, glutamate 195, glutamate 227, and glutamate 231. Serine 252 is a binding site for substrate.

Belongs to the ketol-acid reductoisomerase family. As to quaternary structure, homooctamer. It depends on Mg(2+) as a cofactor.

The enzyme catalyses (2R)-2,3-dihydroxy-3-methylbutanoate + NADP(+) = (2S)-2-acetolactate + NADPH + H(+). It catalyses the reaction (2R,3R)-2,3-dihydroxy-3-methylpentanoate + NADP(+) = (S)-2-ethyl-2-hydroxy-3-oxobutanoate + NADPH + H(+). Its pathway is amino-acid biosynthesis; L-isoleucine biosynthesis; L-isoleucine from 2-oxobutanoate: step 2/4. It functions in the pathway amino-acid biosynthesis; L-valine biosynthesis; L-valine from pyruvate: step 2/4. Involved in the biosynthesis of branched-chain amino acids (BCAA). Catalyzes an alkyl-migration followed by a ketol-acid reduction of (S)-2-acetolactate (S2AL) to yield (R)-2,3-dihydroxy-isovalerate. In the isomerase reaction, S2AL is rearranged via a Mg-dependent methyl migration to produce 3-hydroxy-3-methyl-2-ketobutyrate (HMKB). In the reductase reaction, this 2-ketoacid undergoes a metal-dependent reduction by NADPH to yield (R)-2,3-dihydroxy-isovalerate. The sequence is that of Ketol-acid reductoisomerase (NADP(+)) from Synechocystis sp. (strain ATCC 27184 / PCC 6803 / Kazusa).